A 210-amino-acid chain; its full sequence is Calaxin (210 aa).

EF-hand domains are found at residues 64–99 (TDDM…FLRG), 100–135 (TLDE…SLIR), and 145–180 (GIKD…ENLL). Residues D77, D79, D81, Y83, E88, D113, N115, D117, Y119, E124, D158, D160, D162, R164, and D169 each contribute to the Ca(2+) site.

In terms of assembly, component of the outer dynein arm-docking complex along with ODAD1, ODAD2, ODAD3 and ODAD4.

Its subcellular location is the cytoplasm. It is found in the cytoskeleton. The protein resides in the cilium axoneme. The protein localises to the cell projection. It localises to the cilium. Its subcellular location is the flagellum. Functionally, component of the outer dynein arm-docking complex (ODA-DC) that mediates outer dynein arms (ODA) binding onto the doublet microtubule. Seems to regulate the assembly of both ODAs and their axonemal docking complex onto ciliary microtubules. Regulates ciliary and flagellar motility and is required for cilia-driven determination of body laterality. Regulates ciliary motility and is required for cilia-driven determination of body laterality. This Danio rerio (Zebrafish) protein is Calaxin (clxn).